A 333-amino-acid chain; its full sequence is Phenylalanine--tRNA ligase alpha subunit (333 aa).

A Mg(2+)-binding site is contributed by E258.

Belongs to the class-II aminoacyl-tRNA synthetase family. Phe-tRNA synthetase alpha subunit type 1 subfamily. Tetramer of two alpha and two beta subunits. The cofactor is Mg(2+).

Its subcellular location is the cytoplasm. The enzyme catalyses tRNA(Phe) + L-phenylalanine + ATP = L-phenylalanyl-tRNA(Phe) + AMP + diphosphate + H(+). The sequence is that of Phenylalanine--tRNA ligase alpha subunit from Wigglesworthia glossinidia brevipalpis.